We begin with the raw amino-acid sequence, 634 residues long: RING finger protein 207 (634 aa).

An RING-type zinc finger spans residues 25 to 64 (CPLCHVQYERPCLLDCFHDFCAGCLRGRATDGRLTCPLCQ). The B box-type; atypical zinc-finger motif lies at 93–145 (VEAVRCANCDLECSEQDVETTYFCNTCGQPLCARCRDETHRARMFARHDIVAL). Zn(2+)-binding residues include Cys-98, Cys-101, Cys-127, and His-132. 2 coiled-coil regions span residues 422 to 457 (EHCRHYEDSYRHLQAEMQSLKDQVQELHRDLTKHHS) and 494 to 518 (EIWEEAYQRVANEQEIYEAQLHDLL). Residues 552–634 (FQAPVDEQSE…DVPTWREHPT (83 aa)) form a disordered region.

In terms of assembly, interacts with the core-glycosylated, but not the fully glycosylated form of KCNH2/HERG. Interacts with DNAJA1 and HSPA8. Interacts (via the C-terminus) with HSPA1A; this interaction additively increases KCNH2 expression.

Its subcellular location is the cytoplasm. In terms of biological role, plays a role in cardiac repolarization possibly by stabilizing membrane expression of the potassium channel KCNH2/HERG, or by assisting its synthesis, folding or export from the endoplasmic reticulum, in a heat shock protein-dependent manner. The chain is RING finger protein 207 (RNF207) from Homo sapiens (Human).